The sequence spans 214 residues: 3-isopropylmalate dehydratase small subunit (214 aa).

The protein belongs to the LeuD family. LeuD type 1 subfamily. As to quaternary structure, heterodimer of LeuC and LeuD.

It catalyses the reaction (2R,3S)-3-isopropylmalate = (2S)-2-isopropylmalate. It participates in amino-acid biosynthesis; L-leucine biosynthesis; L-leucine from 3-methyl-2-oxobutanoate: step 2/4. Catalyzes the isomerization between 2-isopropylmalate and 3-isopropylmalate, via the formation of 2-isopropylmaleate. The chain is 3-isopropylmalate dehydratase small subunit from Desulforapulum autotrophicum (strain ATCC 43914 / DSM 3382 / VKM B-1955 / HRM2) (Desulfobacterium autotrophicum).